Reading from the N-terminus, the 252-residue chain is Phosphate import ATP-binding protein PstB (252 aa).

One can recognise an ABC transporter domain in the interval 5 to 247 (MRGQDVKVFY…PKEQRTQDYI (243 aa)). 37–44 (GPSGCGKS) is a binding site for ATP.

It belongs to the ABC transporter superfamily. Phosphate importer (TC 3.A.1.7) family. In terms of assembly, the complex is composed of two ATP-binding proteins (PstB), two transmembrane proteins (PstC and PstA) and a solute-binding protein (PstS).

It localises to the cell inner membrane. The enzyme catalyses phosphate(out) + ATP + H2O = ADP + 2 phosphate(in) + H(+). Its function is as follows. Part of the ABC transporter complex PstSACB involved in phosphate import. Responsible for energy coupling to the transport system. This is Phosphate import ATP-binding protein PstB from Bartonella quintana (strain Toulouse) (Rochalimaea quintana).